Consider the following 152-residue polypeptide: MSTVAELANAVVSNADQKDLLRLSWGVLSVDMEGTGLMLMANLFKTSSAARTKFARLGDVSAGKDNSKLRGHSITLMYALQNFIDALDNVDRLKCVVEKFAVNHINRQISADEFGEIVGPLRQTLKARMGSYFDEDTVSAWASLVAVVQAAL.

Serine 2 is subject to N-acetylserine. Positions 12–152 (VSNADQKDLL…SLVAVVQAAL (141 aa)) constitute a Globin domain. Residues histidine 72 and histidine 104 each coordinate heme b.

This sequence belongs to the globin family. As to quaternary structure, heterotetramer of two alpha chains and two beta chains.

This is Globin-1 subunit beta from Anadara trapezia (Sydney cockle).